The chain runs to 450 residues: Phosphoglucosamine mutase (450 aa).

The active-site Phosphoserine intermediate is Ser101. Mg(2+)-binding residues include Ser101, Asp241, Asp243, and Asp245. At Ser101 the chain carries Phosphoserine.

This sequence belongs to the phosphohexose mutase family. Requires Mg(2+) as cofactor. In terms of processing, activated by phosphorylation.

It carries out the reaction alpha-D-glucosamine 1-phosphate = D-glucosamine 6-phosphate. In terms of biological role, catalyzes the conversion of glucosamine-6-phosphate to glucosamine-1-phosphate. The protein is Phosphoglucosamine mutase of Ligilactobacillus salivarius (strain UCC118) (Lactobacillus salivarius).